The sequence spans 378 residues: MSHLDNGFRSLTLQRFPATDDVNPLQAWEAADEYLLQQLDDTEIRGPVLILNDAFGALSCALAEHKPYSIGDSYISELATRENLRLNGIDESSVKFLDSTADYLQQPGVVLIKVPKTLALLEQQLRALRKVVTSDTRIIAGAKARDIHTSTLELFEKVLGPTTTTLAWKKARLINCTFNEPPLADAPQTVSWKLEGTDWTIHNHANVFSRTGLDIGARFFMQHLPENLEGEIVDLGCGNGVIGLTLLDKNPQAKVVFVDESPMAVASSRMNVETNMPEALDRCEFMINNALSGVEPFRFNAVLCNPPFHQQHALTDNVAWEMFHHARRCLKINGELYIVANRHLDYFHKLKKIFGNCTTIATNNKFVVLKTVKLGRRR.

This sequence belongs to the methyltransferase superfamily. RlmG family.

It is found in the cytoplasm. The catalysed reaction is guanosine(1835) in 23S rRNA + S-adenosyl-L-methionine = N(2)-methylguanosine(1835) in 23S rRNA + S-adenosyl-L-homocysteine + H(+). Specifically methylates the guanine in position 1835 (m2G1835) of 23S rRNA. In Escherichia coli O9:H4 (strain HS), this protein is Ribosomal RNA large subunit methyltransferase G.